A 497-amino-acid chain; its full sequence is Tyrosine-protein kinase SPK-1 (497 aa).

The segment at 1–25 is disordered; it reads MGQKFSIKCKKQSKNKNTSKCQKIP. The 62-residue stretch at 33–94 folds into the SH3 domain; it reads PGSYMVKAKY…PSNYVSKQDG (62 aa). The region spanning 100-200 is the SH2 domain; the sequence is EAWREIQRWE…NTHIPLTDPM (101 aa). A Protein kinase domain is found at 220–482; it reads IEILNEIGRG…LVLQEKMDLL (263 aa). ATP-binding positions include 226–234 and lysine 248; that span reads IGRGFFGSV. Aspartate 342 serves as the catalytic Proton acceptor.

The protein belongs to the protein kinase superfamily. Tyr protein kinase family.

The catalysed reaction is L-tyrosyl-[protein] + ATP = O-phospho-L-tyrosyl-[protein] + ADP + H(+). This is Tyrosine-protein kinase SPK-1 from Girardia tigrina (Planarian).